A 2511-amino-acid chain; its full sequence is Chromodomain-helicase-DNA-binding protein 8 (2511 aa).

The segment at Pro484–Lys615 is disordered. Over residues Gly515 to Gly524 the composition is skewed to gly residues. The span at Lys604–Lys615 shows a compositional bias: basic residues. Chromo domains lie at Ala680–Arg745 and Val760–Arg826. Positions Leu859–Ala1033 constitute a Helicase ATP-binding domain. Position 872–879 (Asp872–Thr879) interacts with ATP. The DEAH box signature appears at Asp984–His987. A Helicase C-terminal domain is found at Leu1174–Ile1330. Disordered regions lie at residues Thr1440 to Gly1482, Glu1715 to Pro1736, Ser2086 to Pro2168, and Pro2468 to Asp2511. A compositionally biased stretch (acidic residues) spans Asp1452 to Asp1461. Residues Asp2111–Asp2125 show a composition bias toward low complexity.

The protein belongs to the SNF2/RAD54 helicase family. CHD8 subfamily. Component of some MLL1/MLL complex.

Its subcellular location is the nucleus. The enzyme catalyses ATP + H2O = ADP + phosphate + H(+). Functionally, ATP-dependent chromatin-remodeling factor, it slides nucleosomes along DNA; nucleosome sliding requires ATP. Acts as a transcription repressor by remodeling chromatin structure and recruiting histone H1 to target genes. Suppresses p53/tp53-mediated apoptosis by recruiting histone H1 and preventing p53/tp53 transactivation activity. Acts as a negative regulator of Wnt signaling pathway by regulating beta-catenin (ctnnb1) activity. Negatively regulates ctnnb1-targeted gene expression by being recruited specifically to the promoter regions of several ctnnb1 responsive genes. May also act as a transcription activator by participating in efficient U6 RNA polymerase III transcription. The sequence is that of Chromodomain-helicase-DNA-binding protein 8 from Danio rerio (Zebrafish).